The primary structure comprises 350 residues: Phosphoribosylformylglycinamidine cyclo-ligase (350 aa).

It belongs to the AIR synthase family.

Its subcellular location is the cytoplasm. The enzyme catalyses 2-formamido-N(1)-(5-O-phospho-beta-D-ribosyl)acetamidine + ATP = 5-amino-1-(5-phospho-beta-D-ribosyl)imidazole + ADP + phosphate + H(+). The protein operates within purine metabolism; IMP biosynthesis via de novo pathway; 5-amino-1-(5-phospho-D-ribosyl)imidazole from N(2)-formyl-N(1)-(5-phospho-D-ribosyl)glycinamide: step 2/2. The polypeptide is Phosphoribosylformylglycinamidine cyclo-ligase (Pseudoalteromonas translucida (strain TAC 125)).